Reading from the N-terminus, the 439-residue chain is L-tryptophan decarboxylase (439 aa).

It belongs to the phosphatidylserine decarboxylase family.

It carries out the reaction L-tryptophan + H(+) = tryptamine + CO2. It functions in the pathway secondary metabolite biosynthesis. L-tryptophan decarboxylase; part of the gene cluster that mediates the biosynthesis of psilocybin, a psychotropic tryptamine-derived natural product. The first step in the pathway is the decarboxylation of L-tryptophan to tryptamine by the decarboxylase psiD. PsiD does not decarboxylate phenylalanine, tyrosine, or 5-hydroxy- L -tryptophan (5-HTP). 4-hydroxy-L-tryptophan is accepted as substrate by psiD as well. The cytochrome P450 monooxygenase psiH then converts tryptamine to 4-hydroxytryptamine. The kinase psiK catalyzes the 4-O-phosphorylation step by converting 4-hydroxytryptamine into norbaeocystin. The methyltransferase psiM then catalyzes iterative methyl transfer to the amino group of norbaeocystin to yield psilocybin via a monomethylated intermediate, baeocystin. 4-hydroxy-6-methyl-l-tryptophancan also be converted the decarboxylase PsiD, kinase PsiK, and methyltransferase PsiM into respectively 6-methyl-norbaeocystin, 6-methylbaeocystin, and 6-methylpsilocybin. This is L-tryptophan decarboxylase from Psilocybe cyanescens.